The following is a 347-amino-acid chain: NADH-ubiquinone oxidoreductase chain 2 (347 aa).

Transmembrane regions (helical) follow at residues 3–23 (PPIL…VLTS), 25–45 (HWLL…PILM), 59–79 (YFLT…INLL), 93–115 (MAST…HFWV), 149–169 (INTN…GWGG), 178–198 (ILAY…TYNP), 200–220 (VMIL…MLFI), 242–262 (SFIL…GFIP), 274–294 (EMII…YFYM), and 323–343 (MALL…TPMM).

This sequence belongs to the complex I subunit 2 family. As to quaternary structure, core subunit of respiratory chain NADH dehydrogenase (Complex I) which is composed of 45 different subunits. Interacts with TMEM242.

It localises to the mitochondrion inner membrane. It catalyses the reaction a ubiquinone + NADH + 5 H(+)(in) = a ubiquinol + NAD(+) + 4 H(+)(out). Core subunit of the mitochondrial membrane respiratory chain NADH dehydrogenase (Complex I) which catalyzes electron transfer from NADH through the respiratory chain, using ubiquinone as an electron acceptor. Essential for the catalytic activity and assembly of complex I. This is NADH-ubiquinone oxidoreductase chain 2 from Nandinia binotata (African palm civet).